We begin with the raw amino-acid sequence, 722 residues long: Bifunctional UDP-N-acetylglucosamine 2-epimerase/N-acetylmannosamine kinase (722 aa).

UDP-binding residues include Arg-19, Ser-23, Arg-113, His-220, and Asn-253. Positions 259, 271, 280, and 281 each coordinate CMP-N-acetyl-beta-neuraminate. UDP is bound by residues Val-282, Ser-301, Ser-302, Glu-307, and Arg-321. Residues 406-722 (TLSALAVDLG…VLDYTTRRIH (317 aa)) are N-acetylmannosamine kinase. Position 413 (Asp-413) interacts with Mg(2+). Gly-416 is an an N-acyl-D-mannosamine 6-phosphate binding site. The ADP site is built by Thr-417, Asn-418, and Arg-420. Residues Gly-476, Arg-477, Thr-489, Asn-516, Asp-517, and Gly-545 each coordinate an N-acyl-D-mannosamine 6-phosphate. Positions 476, 477, 489, 516, and 517 each coordinate an N-acyl-D-mannosamine. Asp-517 is an active-site residue. The an N-acyl-D-mannosamine site is built by Glu-566 and His-569. Residue His-569 participates in an N-acyl-D-mannosamine 6-phosphate binding. His-569, Cys-579, Cys-581, and Cys-586 together coordinate Zn(2+). Glu-588 provides a ligand contact to an N-acyl-D-mannosamine 6-phosphate. Glu-588 is an an N-acyl-D-mannosamine binding site.

In the N-terminal section; belongs to the UDP-N-acetylglucosamine 2-epimerase family. The protein in the C-terminal section; belongs to the ROK (NagC/XylR) family. In terms of assembly, homodimer. Homotetramer. Homohexamer. The hexameric form exhibits both enzyme activities, whereas the dimeric form only catalyzes the phosphorylation of N-acyl-D-mannosamine. Post-translationally, phosphorylated. Phosphorylation by PKC activates the UDP-N-acetylglucosamine 2-epimerase activity.

The protein resides in the cytoplasm. It is found in the cytosol. It carries out the reaction UDP-N-acetyl-alpha-D-glucosamine + H2O = aldehydo-N-acetyl-D-mannosamine + UDP + H(+). It catalyses the reaction an N-acyl-D-mannosamine + ATP = an N-acyl-D-mannosamine 6-phosphate + ADP + H(+). Its pathway is amino-sugar metabolism; N-acetylneuraminate biosynthesis. Its activity is regulated as follows. The UDP-N-acetylglucosamine 2-epimerase activity, in contrast to the N-acetylmannosamine kinase activity, exhibits allosteric regulation by cytidine monophosphate-N-acetylneuraminic acid (CMP-Neu5Ac), the end product of neuraminic acid biosynthesis. Moreover, the activity is contingent upon the oligomeric state of the enzyme. The monomeric form is inactive, while the dimeric form selectively catalyzes the phosphorylation of N-acetylmannosamine. The hexameric form, on the other hand, demonstrates full proficiency in both enzyme activities. Furthermore, the UDP-N-acetylglucosamine 2-epimerase activity is increased by PKC-mediated phosphorylation. In terms of biological role, bifunctional enzyme that possesses both UDP-N-acetylglucosamine 2-epimerase and N-acetylmannosamine kinase activities, and serves as the initiator of the biosynthetic pathway leading to the production of N-acetylneuraminic acid (NeuAc), a critical precursor in the synthesis of sialic acids. By catalyzing this pivotal and rate-limiting step in sialic acid biosynthesis, this enzyme assumes a pivotal role in governing the regulation of cell surface sialylation, playing a role in embryonic angiogenesis. Sialic acids represent a category of negatively charged sugars that reside on the surface of cells as terminal components of glycoconjugates and mediate important functions in various cellular processes, including cell adhesion, signal transduction, and cellular recognition. This chain is Bifunctional UDP-N-acetylglucosamine 2-epimerase/N-acetylmannosamine kinase (GNE), found in Cricetulus griseus (Chinese hamster).